A 333-amino-acid polypeptide reads, in one-letter code: Protein 2 (333 aa).

Disordered regions lie at residues 1–41 and 57–84; these read MTGR…SENA and LGAG…LPPT. Positions 24-33 are enriched in polar residues; sequence QETTKQTTSA. Acidic residues predominate over residues 62–79; sequence DYDETEADPADTYGDTEA.

The sequence is that of Protein 2 from Lactuca sativa (Garden lettuce).